The sequence spans 480 residues: Aromatic-L-amino-acid decarboxylase (480 aa).

Methionine 1 is modified (N-acetylmethionine). Repeat copies occupy residues 58–115 (KDIE…TELE) and 118–178 (MMDW…TQAA). The 2 X approximate tandem repeats stretch occupies residues 58-178 (KDIEKIIMPG…AASPEFTQAA (121 aa)). Threonine 82 provides a ligand contact to substrate. Residues alanine 148 and serine 149 each contribute to the pyridoxal 5'-phosphate site. A substrate-binding site is contributed by histidine 192. Threonine 246 and asparagine 300 together coordinate pyridoxal 5'-phosphate. Lysine 303 carries the post-translational modification N6-(pyridoxal phosphate)lysine.

This sequence belongs to the group II decarboxylase family. As to quaternary structure, homodimer. Pyridoxal 5'-phosphate serves as cofactor.

It catalyses the reaction L-dopa + H(+) = dopamine + CO2. It carries out the reaction 5-hydroxy-L-tryptophan + H(+) = serotonin + CO2. It functions in the pathway catecholamine biosynthesis; dopamine biosynthesis; dopamine from L-tyrosine: step 2/2. Functionally, catalyzes the decarboxylation of L-3,4-dihydroxyphenylalanine (DOPA) to dopamine and L-5-hydroxytryptophan to serotonin. This Mus musculus (Mouse) protein is Aromatic-L-amino-acid decarboxylase (Ddc).